We begin with the raw amino-acid sequence, 141 residues long: Cystatin (141 aa).

An N-terminal signal peptide occupies residues 1–26 (MVHSQLPVAAPLRLLCALLLLPSATM). The Cystatin domain occupies 29–129 (GGLYPRSVTD…CHFQVWSRPW (101 aa)). The Secondary area of contact motif lies at 73 to 77 (QVVTG). Cystine bridges form between cysteine 91–cysteine 107 and cysteine 120–cysteine 140.

It belongs to the cystatin family. As to expression, expressed by the venom gland at an extremely low level (at protein level).

It localises to the secreted. Inhibits various C1 cysteine proteases including cathepsin L, papain and cathepsin B. This protein has no toxic activity and its function in the venom is unknown. It may play a role as a housekeeping or regulatory protein. The chain is Cystatin from Tropidechis carinatus (Australian rough-scaled snake).